A 350-amino-acid polypeptide reads, in one-letter code: S-adenosylmethionine:tRNA ribosyltransferase-isomerase (350 aa).

This sequence belongs to the QueA family. As to quaternary structure, monomer.

The protein localises to the cytoplasm. It catalyses the reaction 7-aminomethyl-7-carbaguanosine(34) in tRNA + S-adenosyl-L-methionine = epoxyqueuosine(34) in tRNA + adenine + L-methionine + 2 H(+). It functions in the pathway tRNA modification; tRNA-queuosine biosynthesis. Transfers and isomerizes the ribose moiety from AdoMet to the 7-aminomethyl group of 7-deazaguanine (preQ1-tRNA) to give epoxyqueuosine (oQ-tRNA). This chain is S-adenosylmethionine:tRNA ribosyltransferase-isomerase, found in Bacillus mycoides (strain KBAB4) (Bacillus weihenstephanensis).